A 388-amino-acid polypeptide reads, in one-letter code: N-acetylneuraminate epimerase (388 aa).

Positions 1-26 (MFSLIGAKRQAIGIAALAWSTGAVMA) are cleaved as a signal peptide. Kelch repeat units lie at residues 48-92 (MAYV…AAAG), 94-147 (KIFA…VGLA), 149-186 (GRIA…KLVD), 187-232 (SYMG…ATMG), 236-285 (FLLV…VAGA), 307-356 (ANAA…DAPG), and 358-387 (LLVV…LSVE).

This sequence belongs to the NanM family. Homodimer.

The protein resides in the periplasm. The catalysed reaction is N-acetyl-alpha-neuraminate = N-acetyl-beta-neuraminate. In terms of biological role, converts alpha-N-acetylneuranimic acid (Neu5Ac) to the beta-anomer, accelerating the equilibrium between the alpha- and beta-anomers. Probably facilitates sialidase-negative bacteria to compete successfully for limited amounts of extracellular Neu5Ac, which is likely taken up in the beta-anomer. In addition, the rapid removal of sialic acid from solution might be advantageous to the bacterium to damp down host responses. The chain is N-acetylneuraminate epimerase from Brucella suis (strain ATCC 23445 / NCTC 10510).